Here is a 294-residue protein sequence, read N- to C-terminus: DNA replication complex GINS protein SLD5 (294 aa).

The protein belongs to the GINS4/SLD5 family. As to quaternary structure, component of the GINS complex which is a heterotetramer composed of SLD5, PSF1, PSF2 and PSF3. Interacts with PSF2.

The protein localises to the nucleus. Required for DNA replication. Functions as part of the GINS complex which plays an essential role in the initiation of DNA replication by binding to DNA replication origins and facilitating the assembly of the DNA replication machinery. The sequence is that of DNA replication complex GINS protein SLD5 from Saccharomyces cerevisiae (strain ATCC 204508 / S288c) (Baker's yeast).